Consider the following 132-residue polypeptide: MKGLGSNIVRSLPNGARLVCADNTGAKELEVIAVKNYVGTVRRLPAGGVGHMVFVSVKKGTPEMRKQVLPAIIIRQKKEYRRADGTRVKFEDNAAVIVTPEGTPKGSEIKGPVSKEAAERWPGVSRLAKIIH.

It belongs to the universal ribosomal protein uL14 family. As to quaternary structure, part of the 50S ribosomal subunit. Forms a cluster with proteins L3 and L24e, part of which may contact the 16S rRNA in 2 intersubunit bridges.

In terms of biological role, binds to 23S rRNA. Forms part of two intersubunit bridges in the 70S ribosome. This chain is Large ribosomal subunit protein uL14, found in Methanococcus maripaludis (strain DSM 14266 / JCM 13030 / NBRC 101832 / S2 / LL).